A 152-amino-acid polypeptide reads, in one-letter code: Large ribosomal subunit protein bL9 (152 aa).

The tract at residues 41–61 is disordered; sequence QSAMSQLNAERKAEQRREAEE. Basic and acidic residues predominate over residues 49–61; it reads AERKAEQRREAEE.

Belongs to the bacterial ribosomal protein bL9 family.

Functionally, binds to the 23S rRNA. The chain is Large ribosomal subunit protein bL9 from Levilactobacillus brevis (strain ATCC 367 / BCRC 12310 / CIP 105137 / JCM 1170 / LMG 11437 / NCIMB 947 / NCTC 947) (Lactobacillus brevis).